A 341-amino-acid polypeptide reads, in one-letter code: tRNA dimethylallyltransferase (341 aa).

Gly15–Thr22 is an ATP binding site. Thr17–Thr22 lines the substrate pocket. Interaction with substrate tRNA stretches follow at residues Asp44 to Leu47, Gln168 to Arg172, Arg253 to Arg258, and Lys302 to Arg309.

Belongs to the IPP transferase family. In terms of assembly, monomer. Requires Mg(2+) as cofactor.

It carries out the reaction adenosine(37) in tRNA + dimethylallyl diphosphate = N(6)-dimethylallyladenosine(37) in tRNA + diphosphate. Functionally, catalyzes the transfer of a dimethylallyl group onto the adenine at position 37 in tRNAs that read codons beginning with uridine, leading to the formation of N6-(dimethylallyl)adenosine (i(6)A). The polypeptide is tRNA dimethylallyltransferase (Verminephrobacter eiseniae (strain EF01-2)).